We begin with the raw amino-acid sequence, 699 residues long: Elongation factor G 1 (699 aa).

In terms of domain architecture, tr-type G spans 8-290; sequence ERYRNIGICA…AVIEYLPSPI (283 aa). GTP is bound by residues 17-24, 88-92, and 142-145; these read AHVDAGKT, DTPGH, and NKMD.

This sequence belongs to the TRAFAC class translation factor GTPase superfamily. Classic translation factor GTPase family. EF-G/EF-2 subfamily.

Its subcellular location is the cytoplasm. Catalyzes the GTP-dependent ribosomal translocation step during translation elongation. During this step, the ribosome changes from the pre-translocational (PRE) to the post-translocational (POST) state as the newly formed A-site-bound peptidyl-tRNA and P-site-bound deacylated tRNA move to the P and E sites, respectively. Catalyzes the coordinated movement of the two tRNA molecules, the mRNA and conformational changes in the ribosome. This Vibrio vulnificus (strain YJ016) protein is Elongation factor G 1.